The following is a 258-amino-acid chain: Type III pantothenate kinase (258 aa).

7–14 lines the ATP pocket; the sequence is DVGNTRLK. Residues tyrosine 96 and 103 to 106 contribute to the substrate site; that span reads GADR. The active-site Proton acceptor is the aspartate 105. ATP is bound at residue threonine 133. Threonine 183 lines the substrate pocket.

The protein belongs to the type III pantothenate kinase family. In terms of assembly, homodimer. NH4(+) serves as cofactor. The cofactor is K(+).

It is found in the cytoplasm. The enzyme catalyses (R)-pantothenate + ATP = (R)-4'-phosphopantothenate + ADP + H(+). It functions in the pathway cofactor biosynthesis; coenzyme A biosynthesis; CoA from (R)-pantothenate: step 1/5. Functionally, catalyzes the phosphorylation of pantothenate (Pan), the first step in CoA biosynthesis. The chain is Type III pantothenate kinase from Acidovorax ebreus (strain TPSY) (Diaphorobacter sp. (strain TPSY)).